The sequence spans 262 residues: Pyridoxine 5'-phosphate synthase (262 aa).

Asn-6 provides a ligand contact to 3-amino-2-oxopropyl phosphate. 8-9 serves as a coordination point for 1-deoxy-D-xylulose 5-phosphate; that stretch reads DH. Residue Arg-17 participates in 3-amino-2-oxopropyl phosphate binding. His-43 serves as the catalytic Proton acceptor. 1-deoxy-D-xylulose 5-phosphate-binding residues include Arg-45 and His-50. Catalysis depends on Glu-70, which acts as the Proton acceptor. Thr-102 serves as a coordination point for 1-deoxy-D-xylulose 5-phosphate. The active-site Proton donor is His-215. 3-amino-2-oxopropyl phosphate contacts are provided by residues Gly-216 and 237 to 238; that span reads GH.

It belongs to the PNP synthase family. In terms of assembly, homooctamer; tetramer of dimers.

Its subcellular location is the cytoplasm. It carries out the reaction 3-amino-2-oxopropyl phosphate + 1-deoxy-D-xylulose 5-phosphate = pyridoxine 5'-phosphate + phosphate + 2 H2O + H(+). It functions in the pathway cofactor biosynthesis; pyridoxine 5'-phosphate biosynthesis; pyridoxine 5'-phosphate from D-erythrose 4-phosphate: step 5/5. Its function is as follows. Catalyzes the complicated ring closure reaction between the two acyclic compounds 1-deoxy-D-xylulose-5-phosphate (DXP) and 3-amino-2-oxopropyl phosphate (1-amino-acetone-3-phosphate or AAP) to form pyridoxine 5'-phosphate (PNP) and inorganic phosphate. This Helicobacter pylori (strain ATCC 700392 / 26695) (Campylobacter pylori) protein is Pyridoxine 5'-phosphate synthase.